A 211-amino-acid chain; its full sequence is Urease accessory protein UreG (211 aa).

Position 13 to 20 (13 to 20 (GPVGSGKT)) interacts with GTP.

Belongs to the SIMIBI class G3E GTPase family. UreG subfamily. In terms of assembly, homodimer. UreD, UreF and UreG form a complex that acts as a GTP-hydrolysis-dependent molecular chaperone, activating the urease apoprotein by helping to assemble the nickel containing metallocenter of UreC. The UreE protein probably delivers the nickel.

Its subcellular location is the cytoplasm. In terms of biological role, facilitates the functional incorporation of the urease nickel metallocenter. This process requires GTP hydrolysis, probably effectuated by UreG. This is Urease accessory protein UreG from Alkalilimnicola ehrlichii (strain ATCC BAA-1101 / DSM 17681 / MLHE-1).